The following is a 436-amino-acid chain: Elongation factor 1-gamma-A (436 aa).

One can recognise a GST N-terminal domain in the interval 2 to 87 (AGGTLYTYPD…YVGNDELRGT (86 aa)). One can recognise a GST C-terminal domain in the interval 88 to 221 (TRLHQAQVIQ…KMAQFDAKKF (134 aa)). Basic and acidic residues-rich tracts occupy residues 221–249 (FAEMQPKKETPKKEKPAKEPKKEKEEKKK) and 265–278 (SEKALAAEPKSKDP). Residues 221–278 (FAEMQPKKETPKKEKPAKEPKKEKEEKKKAAPTPAPAPEDDLDESEKALAAEPKSKDP) are disordered. The region spanning 275 to 436 (SKDPYAHLPK…KPFNQGKIFK (162 aa)) is the EF-1-gamma C-terminal domain.

In terms of assembly, EF-1 is composed of four subunits: alpha, beta, delta, and gamma. Post-translationally, phosphorylated by CDK1. The N-terminus is blocked.

Probably plays a role in anchoring the complex to other cellular components. This chain is Elongation factor 1-gamma-A (eef1g-a), found in Xenopus laevis (African clawed frog).